Reading from the N-terminus, the 1270-residue chain is ATP-dependent helicase/nuclease subunit A (1270 aa).

In terms of domain architecture, UvrD-like helicase ATP-binding spans 3 to 476; it reads TKWTEEQELA…IMLYKNFRSR (474 aa). 24–31 is an ATP binding site; that stretch reads AAAGSGKT. In terms of domain architecture, UvrD-like helicase C-terminal spans 528–823; the sequence is IENLKVAGDI…RIMSIHKSKG (296 aa).

The protein belongs to the helicase family. AddA subfamily. As to quaternary structure, heterodimer of AddA and AddB/RexB. Requires Mg(2+) as cofactor.

The catalysed reaction is Couples ATP hydrolysis with the unwinding of duplex DNA by translocating in the 3'-5' direction.. It catalyses the reaction ATP + H2O = ADP + phosphate + H(+). In terms of biological role, the heterodimer acts as both an ATP-dependent DNA helicase and an ATP-dependent, dual-direction single-stranded exonuclease. Recognizes the chi site generating a DNA molecule suitable for the initiation of homologous recombination. The AddA nuclease domain is required for chi fragment generation; this subunit has the helicase and 3' -&gt; 5' nuclease activities. This is ATP-dependent helicase/nuclease subunit A from Clostridium perfringens (strain SM101 / Type A).